The following is a 236-amino-acid chain: Ubiquinone biosynthesis O-methyltransferase (236 aa).

Arg-39, Gly-59, Asp-80, and Met-124 together coordinate S-adenosyl-L-methionine.

It belongs to the methyltransferase superfamily. UbiG/COQ3 family.

The catalysed reaction is a 3-demethylubiquinol + S-adenosyl-L-methionine = a ubiquinol + S-adenosyl-L-homocysteine + H(+). It catalyses the reaction a 3-(all-trans-polyprenyl)benzene-1,2-diol + S-adenosyl-L-methionine = a 2-methoxy-6-(all-trans-polyprenyl)phenol + S-adenosyl-L-homocysteine + H(+). It participates in cofactor biosynthesis; ubiquinone biosynthesis. Its function is as follows. O-methyltransferase that catalyzes the 2 O-methylation steps in the ubiquinone biosynthetic pathway. In Shewanella putrefaciens (strain CN-32 / ATCC BAA-453), this protein is Ubiquinone biosynthesis O-methyltransferase.